The sequence spans 280 residues: Undecaprenyl-diphosphatase (280 aa).

8 helical membrane-spanning segments follow: residues 19 to 39, 44 to 64, 89 to 109, 125 to 145, 156 to 176, 197 to 217, 226 to 246, and 259 to 279; these read FLPV…PFSG, FDDL…LFLY, FYFL…GFIA, ILAS…WFFQ, VGFR…IPGV, AEFS…YKLI, VTIP…TLVI, and GVFG…TKFI.

This sequence belongs to the UppP family.

It localises to the cell inner membrane. It catalyses the reaction di-trans,octa-cis-undecaprenyl diphosphate + H2O = di-trans,octa-cis-undecaprenyl phosphate + phosphate + H(+). Catalyzes the dephosphorylation of undecaprenyl diphosphate (UPP). Confers resistance to bacitracin. This is Undecaprenyl-diphosphatase from Leptospira borgpetersenii serovar Hardjo-bovis (strain L550).